We begin with the raw amino-acid sequence, 259 residues long: Small ribosomal subunit protein uS2 (259 aa).

Residues 228-259 (VSFGSEEAEENNQKEDNEEIFEIEDVDESEEM) form a disordered region. Acidic residues predominate over residues 233-259 (EEAEENNQKEDNEEIFEIEDVDESEEM).

It belongs to the universal ribosomal protein uS2 family.

In Thermosipho africanus (strain TCF52B), this protein is Small ribosomal subunit protein uS2.